The following is a 63-amino-acid chain: Conotoxin Pn-B01411 (63 aa).

An N-terminal signal peptide occupies residues 1–22 (MRCFPVFIILLLLMASAPSFDA). Residues 23 to 49 (RPKTEDDVPLSSFRDNLKRTLRTLLDP) constitute a propeptide that is removed on maturation. The residue at position 62 (Ile-62) is an Isoleucine amide.

This sequence belongs to the conotoxin T superfamily. Contains 2 disulfide bonds that can be either 'C1-C3, C2-C4' or 'C1-C4, C2-C3', since these disulfide connectivities have been observed for conotoxins with cysteine framework V (for examples, see AC P0DQQ7 and AC P81755). Expressed by the venom duct.

Its subcellular location is the secreted. This Conus pennaceus (Feathered cone) protein is Conotoxin Pn-B01411.